Reading from the N-terminus, the 251-residue chain is Phosphate import ATP-binding protein PstB (251 aa).

The region spanning 5 to 246 (IKIRGVNFFY…PRDKRTEDYI (242 aa)) is the ABC transporter domain. Residue 37–44 (GPSGCGKS) participates in ATP binding.

This sequence belongs to the ABC transporter superfamily. Phosphate importer (TC 3.A.1.7) family. The complex is composed of two ATP-binding proteins (PstB), two transmembrane proteins (PstC and PstA) and a solute-binding protein (PstS).

It localises to the cell membrane. The enzyme catalyses phosphate(out) + ATP + H2O = ADP + 2 phosphate(in) + H(+). In terms of biological role, part of the ABC transporter complex PstSACB involved in phosphate import. Responsible for energy coupling to the transport system. This chain is Phosphate import ATP-binding protein PstB, found in Dehalococcoides mccartyi (strain CBDB1).